The following is a 347-amino-acid chain: Holliday junction branch migration complex subunit RuvB (347 aa).

Residues 1-10 (MAIVSSSSGR) are compositionally biased toward polar residues. Residues 1 to 29 (MAIVSSSSGRKSPCRETALVDPQPAPEEQ) form a disordered region. The interval 13–198 (PCRETALVDP…FGLIQRLEFY (186 aa)) is large ATPase domain (RuvB-L). The ATP site is built by leucine 37, arginine 38, glycine 79, lysine 82, threonine 83, threonine 84, arginine 188, tyrosine 198, and arginine 235. Position 83 (threonine 83) interacts with Mg(2+). The interval 199–270 (GQTDLEAIVA…MVAEALSLHR (72 aa)) is small ATPAse domain (RuvB-S). Residues 273–347 (HRGLDASDRR…AARSHIAEAA (75 aa)) are head domain (RuvB-H). Residues arginine 328 and arginine 333 each contribute to the DNA site.

Belongs to the RuvB family. As to quaternary structure, homohexamer. Forms an RuvA(8)-RuvB(12)-Holliday junction (HJ) complex. HJ DNA is sandwiched between 2 RuvA tetramers; dsDNA enters through RuvA and exits via RuvB. An RuvB hexamer assembles on each DNA strand where it exits the tetramer. Each RuvB hexamer is contacted by two RuvA subunits (via domain III) on 2 adjacent RuvB subunits; this complex drives branch migration. In the full resolvosome a probable DNA-RuvA(4)-RuvB(12)-RuvC(2) complex forms which resolves the HJ.

Its subcellular location is the cytoplasm. It catalyses the reaction ATP + H2O = ADP + phosphate + H(+). Its function is as follows. The RuvA-RuvB-RuvC complex processes Holliday junction (HJ) DNA during genetic recombination and DNA repair, while the RuvA-RuvB complex plays an important role in the rescue of blocked DNA replication forks via replication fork reversal (RFR). RuvA specifically binds to HJ cruciform DNA, conferring on it an open structure. The RuvB hexamer acts as an ATP-dependent pump, pulling dsDNA into and through the RuvAB complex. RuvB forms 2 homohexamers on either side of HJ DNA bound by 1 or 2 RuvA tetramers; 4 subunits per hexamer contact DNA at a time. Coordinated motions by a converter formed by DNA-disengaged RuvB subunits stimulates ATP hydrolysis and nucleotide exchange. Immobilization of the converter enables RuvB to convert the ATP-contained energy into a lever motion, pulling 2 nucleotides of DNA out of the RuvA tetramer per ATP hydrolyzed, thus driving DNA branch migration. The RuvB motors rotate together with the DNA substrate, which together with the progressing nucleotide cycle form the mechanistic basis for DNA recombination by continuous HJ branch migration. Branch migration allows RuvC to scan DNA until it finds its consensus sequence, where it cleaves and resolves cruciform DNA. This is Holliday junction branch migration complex subunit RuvB from Synechococcus sp. (strain CC9902).